Consider the following 154-residue polypeptide: Regulatory protein RecX (154 aa).

Belongs to the RecX family.

It localises to the cytoplasm. Functionally, modulates RecA activity. This Trichlorobacter lovleyi (strain ATCC BAA-1151 / DSM 17278 / SZ) (Geobacter lovleyi) protein is Regulatory protein RecX.